The sequence spans 156 residues: ATP synthase subunit b (156 aa).

The helical transmembrane segment at 7 to 29 (LLGQAISFLLFVWFCMKFVWPPL) threads the bilayer.

This sequence belongs to the ATPase B chain family. As to quaternary structure, F-type ATPases have 2 components, F(1) - the catalytic core - and F(0) - the membrane proton channel. F(1) has five subunits: alpha(3), beta(3), gamma(1), delta(1), epsilon(1). F(0) has three main subunits: a(1), b(2) and c(10-14). The alpha and beta chains form an alternating ring which encloses part of the gamma chain. F(1) is attached to F(0) by a central stalk formed by the gamma and epsilon chains, while a peripheral stalk is formed by the delta and b chains.

It is found in the cell inner membrane. In terms of biological role, f(1)F(0) ATP synthase produces ATP from ADP in the presence of a proton or sodium gradient. F-type ATPases consist of two structural domains, F(1) containing the extramembraneous catalytic core and F(0) containing the membrane proton channel, linked together by a central stalk and a peripheral stalk. During catalysis, ATP synthesis in the catalytic domain of F(1) is coupled via a rotary mechanism of the central stalk subunits to proton translocation. Component of the F(0) channel, it forms part of the peripheral stalk, linking F(1) to F(0). The sequence is that of ATP synthase subunit b from Shewanella halifaxensis (strain HAW-EB4).